The primary structure comprises 501 residues: Beta-secretase 1 (501 aa).

The N-terminal stretch at 1 to 21 (MAQALPWLLLWMGSGVLPAHG) is a signal peptide. Residues 22 to 45 (SQPGIRLPLRSGLGGAPLGLRLPR) constitute a propeptide that is removed on maturation. At 22–457 (SQPGIRLPLR…PQTDESTLMT (436 aa)) the chain is on the extracellular side. The interval 39–58 (LGLRLPRETDEESEEPGRRG) is disordered. In terms of domain architecture, Peptidase A1 spans 75 to 416 (YYVEMTLGSP…DRARKRIGFA (342 aa)). The active site involves Asp93. The residue at position 126 (Lys126) is an N6-acetyllysine. N-linked (GlcNAc...) asparagine glycans are attached at residues Asn153, Asn172, and Asn223. Disulfide bonds link Cys216–Cys420, Cys278–Cys443, and Cys330–Cys380. Lys275, Lys279, and Lys285 each carry N6-acetyllysine. Asp289 is an active-site residue. 3 positions are modified to N6-acetyllysine: Lys299, Lys300, and Lys307. A glycan (N-linked (GlcNAc...) asparagine) is linked at Asn354. A helical transmembrane segment spans residues 458-478 (IAYVMAAICALFMLPLCLMVC). 4 S-palmitoyl cysteine lipidation sites follow: Cys474, Cys478, Cys482, and Cys485. Residues 479–501 (QWRCLRCLRHQHDDFADDISLLK) are Cytoplasmic-facing. Positions 479 to 501 (QWRCLRCLRHQHDDFADDISLLK) are interaction with RTN3. Positions 496–500 (DISLL) match the DXXLL motif. Position 498 is a phosphoserine (Ser498). Lys501 participates in a covalent cross-link: Glycyl lysine isopeptide (Lys-Gly) (interchain with G-Cter in ubiquitin).

It belongs to the peptidase A1 family. As to quaternary structure, monomer. Interacts (via DXXLL motif) with GGA1, GGA2 and GGA3 (via their VHS domain); the interaction highly increases when BACE1 is phosphorylated at Ser-498. Interacts with RTN1; RTN2; RTN3 and RTN4; the interaction leads to inhibition of amyloid precursor protein processing. Interacts with SNX6. Interacts with PCSK9. Interacts with NAT8 and NAT8B. Interacts with BIN1. Interacts (via extracellular domain) with ADAM10 (via extracellular domain). Interacts with SORL1; this interaction may affect binding with APP and hence reduce APP cleavage. Interacts with NRDC AND NRG1. In terms of processing, palmitoylation mediates lipid raft localization. Acetylated in the endoplasmic reticulum at Lys-126, Lys-275, Lys-279, Lys-285, Lys-299, Lys-300 and Lys-307. Acetylation by NAT8 and NAT8B is transient and deacetylation probably occurs in the Golgi. Acetylation regulates the maturation, the transport to the plasma membrane, the stability and the expression of the protein. Post-translationally, ubiquitinated at Lys-501, ubiquitination leads to lysosomal degradation. Monoubiquitinated and 'Lys-63'-linked polyubitinated. Deubiquitnated by USP8; inhibits lysosomal degradation. In terms of processing, phosphorylation at Ser-498 is required for interaction with GGA1 and retrograded transport from endosomal compartments to the trans-Golgi network. Non-phosphorylated BACE1 enters a direct recycling route to the cell surface. N-Glycosylated. Addition of a bisecting N-acetylglucosamine by MGAT3 blocks lysosomal targeting, further degradation and is required for maintaining stability under stress conditions.

It is found in the cell membrane. It localises to the golgi apparatus. The protein resides in the trans-Golgi network. Its subcellular location is the endoplasmic reticulum. The protein localises to the endosome. It is found in the cell surface. It localises to the cytoplasmic vesicle membrane. The protein resides in the membrane raft. Its subcellular location is the lysosome. The protein localises to the late endosome. It is found in the early endosome. It localises to the recycling endosome. The protein resides in the cell projection. Its subcellular location is the axon. The protein localises to the dendrite. The enzyme catalyses Broad endopeptidase specificity. Cleaves Glu-Val-Asn-Leu-|-Asp-Ala-Glu-Phe in the Swedish variant of Alzheimer's amyloid precursor protein.. Its activity is regulated as follows. Inhibited by RTN3 and RTN4. Responsible for the proteolytic processing of the amyloid precursor protein (APP). Cleaves at the N-terminus of the A-beta peptide sequence, between residues 671 and 672 of APP, leads to the generation and extracellular release of beta-cleaved soluble APP, and a corresponding cell-associated C-terminal fragment which is later released by gamma-secretase. Cleaves CHL1. The chain is Beta-secretase 1 (BACE1) from Bos taurus (Bovine).